Consider the following 376-residue polypeptide: Putative glutamate--cysteine ligase 2-1 (376 aa).

It belongs to the glutamate--cysteine ligase type 2 family. YbdK subfamily.

The catalysed reaction is L-cysteine + L-glutamate + ATP = gamma-L-glutamyl-L-cysteine + ADP + phosphate + H(+). Its function is as follows. ATP-dependent carboxylate-amine ligase which exhibits weak glutamate--cysteine ligase activity. The sequence is that of Putative glutamate--cysteine ligase 2-1 from Mycobacterium sp. (strain JLS).